Consider the following 548-residue polypeptide: Copine-2 (548 aa).

C2 domains lie at 6-131 (DGGA…TRPL) and 138-263 (PAGK…PLEI). Residues Asp-39, Asp-45, Asp-97, Asp-99, Ser-102, Asp-109, Asp-170, Asp-176, Asp-232, Asp-234, and Asp-240 each contribute to the Ca(2+) site. The interval 247 to 304 (TSVLQMSEARDGVPLEIECINPKKQRKKKSYKNSGIIILRSCKIHRNYSFLDYILGGC) is linker region. Residues 305-507 (QLMFTVGIDF…AARDIVQFVP (203 aa)) enclose the VWFA domain.

The protein belongs to the copine family. Ca(2+) serves as cofactor.

The protein localises to the cytoplasm. It localises to the nucleus. The protein resides in the cell membrane. Functionally, calcium-dependent phospholipid-binding protein that plays a role in calcium-mediated intracellular processes. Exhibits calcium-dependent cell membrane binding properties. This is Copine-2 from Mus musculus (Mouse).